A 342-amino-acid polypeptide reads, in one-letter code: Flagellar P-ring protein (342 aa).

Residues 1 to 19 form the signal peptide; sequence MKRVFLWLIFVLAFHKLLA.

This sequence belongs to the FlgI family. The basal body constitutes a major portion of the flagellar organelle and consists of four rings (L,P,S, and M) mounted on a central rod.

The protein resides in the periplasm. The protein localises to the bacterial flagellum basal body. Its function is as follows. Assembles around the rod to form the L-ring and probably protects the motor/basal body from shearing forces during rotation. The polypeptide is Flagellar P-ring protein (Helicobacter pylori (strain G27)).